A 419-amino-acid chain; its full sequence is Keratin, type II cytoskeletal I (419 aa).

Residues 1–16 form a linker 1 region; it reads KGSTKRANLDPLFEKY. The IF rod domain maps to 1–275; that stretch reads KGSTKRANLD…YMLEGEEGRM (275 aa). The coil 1B stretch occupies residues 17-108; the sequence is ISDLKRYLDN…TLFAAELSQV (92 aa). The tract at residues 109–132 is linker 12; it reads HDQVTDTSVVLTMDNNRDLNLDSI. Positions 133 to 271 are coil 2; the sequence is IKEVKCQYEQ…STYRYMLEGE (139 aa). A tail region spans residues 272 to 419; sequence EGRMSGQISN…STTSTTKRSY (148 aa).

The protein belongs to the intermediate filament family. Heterotetramer of two type I and two type II keratins.

The polypeptide is Keratin, type II cytoskeletal I (Xenopus laevis (African clawed frog)).